The chain runs to 421 residues: Putative hydro-lyase KRH_21160 (421 aa).

Disordered stretches follow at residues 200-298 (TWGH…SPVT) and 312-421 (TRAG…AVSR). A compositionally biased stretch (basic residues) spans 224 to 237 (GSRRRPRWWSRLRR). Low complexity-rich tracts occupy residues 243 to 260 (PRAT…TRCP) and 370 to 380 (SRGPGPCPRAA).

The protein belongs to the D-glutamate cyclase family.

This chain is Putative hydro-lyase KRH_21160, found in Kocuria rhizophila (strain ATCC 9341 / DSM 348 / NBRC 103217 / DC2201).